A 225-amino-acid chain; its full sequence is MIVISHVLGNVKTDPVWAEKLKAYELDYLTLEHGDMYKNSCRKMTEQGKDLGISLERNSLLADGDVLLCDDKHAYAIIVKLILRDVMIIDLTDLLNFSHEMMLKISFELGHALGNQHWKSIIHESQVFVPLSVSHKVMESVIQTHRFTGIHYRFEKGDSILSCLTPSEARLLFGGAEDLGAHVHVDHSHSHDFMGHSHEHEGHRHVHNHAGNSHDNEHDEHHSRR.

2 stretches are compositionally biased toward basic and acidic residues: residues His189 to Gly202 and Asn212 to Arg225. The interval His189 to Arg225 is disordered.

Belongs to the UreE family.

The protein resides in the cytoplasm. Functionally, involved in urease metallocenter assembly. Binds nickel. Probably functions as a nickel donor during metallocenter assembly. This is Urease accessory protein UreE from Edwardsiella ictaluri.